The chain runs to 311 residues: Coproporphyrin III ferrochelatase 1 (311 aa).

Fe-coproporphyrin III contacts are provided by residues Tyr12, Arg29, 45–46, Ser53, and Tyr124; that span reads RY. Fe(2+) is bound by residues His182 and Glu263.

This sequence belongs to the ferrochelatase family.

It is found in the cytoplasm. It carries out the reaction Fe-coproporphyrin III + 2 H(+) = coproporphyrin III + Fe(2+). Its pathway is porphyrin-containing compound metabolism; protoheme biosynthesis. Its function is as follows. Involved in coproporphyrin-dependent heme b biosynthesis. Catalyzes the insertion of ferrous iron into coproporphyrin III to form Fe-coproporphyrin III. This chain is Coproporphyrin III ferrochelatase 1, found in Bacillus anthracis.